Here is a 305-residue protein sequence, read N- to C-terminus: Protein ORANGE, chloroplastic (305 aa).

The N-terminal 54 residues, M1–S54, are a transit peptide targeting the chloroplast. The next 2 membrane-spanning stretches (helical) occupy residues V144–A164 and I197–V217. The CR-type-like stretch occupies residues V206–H297. The CXXCXGXG motif repeat unit spans residues C228–G235. A CXXCXXXG motif repeat occupies C239–G246. Residues C272 to G279 form a CXXCXGXG motif repeat. The CXXCXXXG motif repeat unit spans residues C283–G290.

Belongs to the orange-like family. As to quaternary structure, interacts with ERF1-2. Expressed in young leaves, curds and flower buds.

The protein resides in the plastid. It localises to the chloroplast membrane. The protein localises to the nucleus. Functionally, involved in chromoplast differentiation. Is associated with a cellular process that triggers the differentiation of pro-plastids or other non-colored plastids into chromoplasts for carotenoid accumulation. Associated with carotenoid accumulation in de-etiolated cotyledons. Controls leaf petiole elongation by suppressing the expression of ERF1 genes. This chain is Protein ORANGE, chloroplastic, found in Brassica oleracea var. botrytis (Cauliflower).